A 197-amino-acid chain; its full sequence is Glycerol-3-phosphate acyltransferase (197 aa).

The next 5 membrane-spanning stretches (helical) occupy residues 6–26 (LFIVLLLLSYLIGSISTAIIV), 58–78 (AITLIGDGLKGAIPVLIAHYL), 82–102 (MLNVTWVILVTFLGHVYPIFF), 116–136 (ALLALSYLTGLSFIITWVFVA), and 157–177 (FYLITNNLASTYVIILICLWI).

Belongs to the PlsY family. In terms of assembly, probably interacts with PlsX.

It is found in the cell inner membrane. It catalyses the reaction an acyl phosphate + sn-glycerol 3-phosphate = a 1-acyl-sn-glycero-3-phosphate + phosphate. The protein operates within lipid metabolism; phospholipid metabolism. Functionally, catalyzes the transfer of an acyl group from acyl-phosphate (acyl-PO(4)) to glycerol-3-phosphate (G3P) to form lysophosphatidic acid (LPA). This enzyme utilizes acyl-phosphate as fatty acyl donor, but not acyl-CoA or acyl-ACP. The chain is Glycerol-3-phosphate acyltransferase from Ruthia magnifica subsp. Calyptogena magnifica.